The following is a 274-amino-acid chain: Dermonecrotic toxin LarSicTox-alphaIB2bii (274 aa).

H3 is an active-site residue. 2 residues coordinate Mg(2+): E23 and D25. H39 serves as the catalytic Nucleophile. 2 disulfide bridges follow: C43-C49 and C45-C188. D83 contacts Mg(2+). An N-linked (GlcNAc...) asparagine glycan is attached at N251.

Belongs to the arthropod phospholipase D family. Class II subfamily. Mg(2+) is required as a cofactor. Expressed by the venom gland.

It is found in the secreted. It carries out the reaction an N-(acyl)-sphingosylphosphocholine = an N-(acyl)-sphingosyl-1,3-cyclic phosphate + choline. The enzyme catalyses an N-(acyl)-sphingosylphosphoethanolamine = an N-(acyl)-sphingosyl-1,3-cyclic phosphate + ethanolamine. The catalysed reaction is a 1-acyl-sn-glycero-3-phosphocholine = a 1-acyl-sn-glycero-2,3-cyclic phosphate + choline. It catalyses the reaction a 1-acyl-sn-glycero-3-phosphoethanolamine = a 1-acyl-sn-glycero-2,3-cyclic phosphate + ethanolamine. Functionally, dermonecrotic toxins cleave the phosphodiester linkage between the phosphate and headgroup of certain phospholipids (sphingolipid and lysolipid substrates), forming an alcohol (often choline) and a cyclic phosphate. This toxin acts on sphingomyelin (SM). It may also act on ceramide phosphoethanolamine (CPE), lysophosphatidylcholine (LPC) and lysophosphatidylethanolamine (LPE), but not on lysophosphatidylserine (LPS), and lysophosphatidylglycerol (LPG). It acts by transphosphatidylation, releasing exclusively cyclic phosphate products as second products. Induces dermonecrosis, hemolysis, increased vascular permeability, edema, inflammatory response, and platelet aggregation. The chain is Dermonecrotic toxin LarSicTox-alphaIB2bii from Loxosceles arizonica (Arizona brown spider).